The chain runs to 344 residues: Phenylalanine--tRNA ligase alpha subunit (344 aa).

E256 is a Mg(2+) binding site.

Belongs to the class-II aminoacyl-tRNA synthetase family. Phe-tRNA synthetase alpha subunit type 1 subfamily. Tetramer of two alpha and two beta subunits. Mg(2+) serves as cofactor.

Its subcellular location is the cytoplasm. The enzyme catalyses tRNA(Phe) + L-phenylalanine + ATP = L-phenylalanyl-tRNA(Phe) + AMP + diphosphate + H(+). This chain is Phenylalanine--tRNA ligase alpha subunit, found in Geobacillus kaustophilus (strain HTA426).